Here is a 554-residue protein sequence, read N- to C-terminus: (Z)-gamma-bisabolene synthase 1 (554 aa).

Residues aspartate 306, aspartate 310, aspartate 450, and aspartate 458 each contribute to the Mg(2+) site. Positions 306-310 (DDACD) match the DDXXD motif motif.

It belongs to the terpene synthase family. Tpsa subfamily. Mg(2+) serves as cofactor. Requires Mn(2+) as cofactor. As to expression, predominantly expressed in roots. Expressed in the cortex and the sub-epidermal layers of roots. Also detected in leaf hydathodes and flower stigmata.

Its subcellular location is the cytoplasm. It catalyses the reaction (2E,6E)-farnesyl diphosphate = (Z)-gamma-bisabolene + diphosphate. It participates in secondary metabolite biosynthesis; terpenoid biosynthesis. In terms of biological role, involved in sesquiterpene (C15) biosynthesis. The major product is (Z)-gamma-bisabolene with minor amounts of (E)-nerolidol and alpha-bisabolol. This is (Z)-gamma-bisabolene synthase 1 (TPS12) from Arabidopsis thaliana (Mouse-ear cress).